Reading from the N-terminus, the 342-residue chain is Methylthioribose-1-phosphate isomerase (342 aa).

Substrate-binding positions include 49–51, Arg86, and Gln187; that span reads RGA. Asp228 functions as the Proton donor in the catalytic mechanism. Substrate is bound at residue 238-239; that stretch reads NK.

The protein belongs to the eIF-2B alpha/beta/delta subunits family. MtnA subfamily.

The catalysed reaction is 5-(methylsulfanyl)-alpha-D-ribose 1-phosphate = 5-(methylsulfanyl)-D-ribulose 1-phosphate. It participates in amino-acid biosynthesis; L-methionine biosynthesis via salvage pathway; L-methionine from S-methyl-5-thio-alpha-D-ribose 1-phosphate: step 1/6. Functionally, catalyzes the interconversion of methylthioribose-1-phosphate (MTR-1-P) into methylthioribulose-1-phosphate (MTRu-1-P). In Klebsiella pneumoniae subsp. pneumoniae (strain ATCC 700721 / MGH 78578), this protein is Methylthioribose-1-phosphate isomerase.